Here is a 458-residue protein sequence, read N- to C-terminus: uncharacterized protein (458 aa).

One can recognise a TRAM domain in the interval 5 to 65 (QAPVNKNDVV…KGYGFGRVLN (61 aa)). [4Fe-4S] cluster contacts are provided by Cys-78, Cys-84, Cys-87, and Cys-165. Positions 289, 318, 339, and 387 each coordinate S-adenosyl-L-methionine. Cys-414 acts as the Nucleophile in catalysis.

Belongs to the class I-like SAM-binding methyltransferase superfamily. RNA M5U methyltransferase family.

This is an uncharacterized protein from Halalkalibacterium halodurans (strain ATCC BAA-125 / DSM 18197 / FERM 7344 / JCM 9153 / C-125) (Bacillus halodurans).